A 426-amino-acid chain; its full sequence is Glutamate-1-semialdehyde 2,1-aminomutase (426 aa).

Lysine 265 carries the post-translational modification N6-(pyridoxal phosphate)lysine.

This sequence belongs to the class-III pyridoxal-phosphate-dependent aminotransferase family. HemL subfamily. As to quaternary structure, homodimer. The cofactor is pyridoxal 5'-phosphate.

It is found in the cytoplasm. The catalysed reaction is (S)-4-amino-5-oxopentanoate = 5-aminolevulinate. It functions in the pathway porphyrin-containing compound metabolism; protoporphyrin-IX biosynthesis; 5-aminolevulinate from L-glutamyl-tRNA(Glu): step 2/2. The sequence is that of Glutamate-1-semialdehyde 2,1-aminomutase from Escherichia coli O9:H4 (strain HS).